The following is a 309-amino-acid chain: Spermatid maturation protein 1 (309 aa).

The chain crosses the membrane as a helical span at residues 29-49 (VLLLLGLIICINISINIVTLL). The interval 209 to 231 (PPPPSPEAPSHKNGGEGAVPEAE) is disordered. Residues 259 to 285 (RIVYDARDMRRRLRELTREVEALSGCY) are a coiled coil.

It localises to the membrane. The protein localises to the cytoplasm. Functionally, required for proper cytoplasm removal during spermatogenesis. The chain is Spermatid maturation protein 1 (SPEM1) from Homo sapiens (Human).